Here is a 219-residue protein sequence, read N- to C-terminus: Mediator of RNA polymerase II transcription subunit 20b (219 aa).

It belongs to the Mediator complex subunit 20 family. Component of the Mediator complex.

It is found in the nucleus. Functionally, component of the Mediator complex, a coactivator involved in the regulated transcription of nearly all RNA polymerase II-dependent genes. Mediator functions as a bridge to convey information from gene-specific regulatory proteins to the basal RNA polymerase II transcription machinery. The Mediator complex, having a compact conformation in its free form, is recruited to promoters by direct interactions with regulatory proteins and serves for the assembly of a functional preinitiation complex with RNA polymerase II and the general transcription factors. This Arabidopsis thaliana (Mouse-ear cress) protein is Mediator of RNA polymerase II transcription subunit 20b (MED20B).